The sequence spans 127 residues: Cold-regulated protein 1 (127 aa).

Positions 39–127 (ARGPPPSPAP…WTRPRMARAR (89 aa)) are disordered. Basic residues predominate over residues 85–101 (SRRRRRRRATRRARSRM). Residues 102 to 121 (PRTTPWRAPRAPARAWWTRP) show a composition bias toward low complexity.

The sequence is that of Cold-regulated protein 1 from Hordeum vulgare (Barley).